Consider the following 307-residue polypeptide: Serine/threonine-protein phosphatase PP2A-5 catalytic subunit (307 aa).

The Mn(2+) site is built by D55, H57, D83, and N115. Residue H116 is the Proton donor of the active site. H165 and H239 together coordinate Mn(2+). Position 307 is a leucine methyl ester (L307).

This sequence belongs to the PPP phosphatase family. PP-2A subfamily. As to quaternary structure, PP2A consists of a common heterodimeric core enzyme, composed of a 36 kDa catalytic subunit (subunit C) and a 65 kDa constant regulatory subunit (subunit A), that associates with a variety of regulatory subunits such as subunits B (the R2/B/PR55/B55, R3/B''/PR72/PR130/PR59 and R5/B'/B56 families). Also interacts with CHIP and TAF12B. Interacts with B'THETA. Interacts with CLC-A, CLC-B, CLC-C and CLC-G. It depends on Mn(2+) as a cofactor. Reversibly methyl esterified on Leu-307 by leucine carboxyl methyltransferase 1 (LCMT1) and pectin methylesterase 1 (PME1). Carboxyl methylation influences the affinity of the catalytic subunit for the different regulatory subunits, thereby modulating the PP2A holoenzyme's substrate specificity, enzyme activity and cellular localization. Post-translationally, phosphorylation of either threonine (by autophosphorylation-activated protein kinase) or tyrosine results in inactivation of the phosphatase. Auto-dephosphorylation has been suggested as a mechanism for reactivation. In terms of processing, ubiquitinated. CHIP-mediated ubiquitination enhances phosphatase activity after an abiotic stress such as low temperature or darkness.

The protein localises to the cytoplasm. It is found in the cytosol. Its subcellular location is the peroxisome. It catalyses the reaction O-phospho-L-seryl-[protein] + H2O = L-seryl-[protein] + phosphate. The enzyme catalyses O-phospho-L-threonyl-[protein] + H2O = L-threonyl-[protein] + phosphate. In terms of biological role, associates with the serine/threonine-protein phosphatase PP2A regulatory subunits A and B' to positively regulates beta-oxidation of fatty acids and protoauxins in peroxisomes by dephosphorylating peroxisomal beta-oxidation-related proteins. Involved in the positive regulation of salt stress responses. May function by increasing chloride channel activities on vacuolar membranes. In Arabidopsis thaliana (Mouse-ear cress), this protein is Serine/threonine-protein phosphatase PP2A-5 catalytic subunit.